Here is a 470-residue protein sequence, read N- to C-terminus: Serine/threonine-protein kinase-like protein At1g28390 (470 aa).

The Protein kinase domain occupies 52–333 (FSANNFLGKG…LEVVECLKTV (282 aa)). ATP-binding positions include 58–66 (LGKGSHGRV) and Lys81. Asp186 acts as the Proton acceptor in catalysis. Residues Thr221 and Thr226 each carry the phosphothreonine modification. Tyr234 bears the Phosphotyrosine mark.

It belongs to the protein kinase superfamily. Ser/Thr protein kinase family.

The enzyme catalyses L-seryl-[protein] + ATP = O-phospho-L-seryl-[protein] + ADP + H(+). It catalyses the reaction L-threonyl-[protein] + ATP = O-phospho-L-threonyl-[protein] + ADP + H(+). The chain is Serine/threonine-protein kinase-like protein At1g28390 from Arabidopsis thaliana (Mouse-ear cress).